Here is a 714-residue protein sequence, read N- to C-terminus: Phosphoribosylformylglycinamidine synthase subunit PurL (714 aa).

His-34 is an active-site residue. Tyr-37 is an ATP binding site. Glu-78 is a Mg(2+) binding site. Residues 79–82 and Arg-101 contribute to the substrate site; that span reads SHNH. His-80 functions as the Proton acceptor in the catalytic mechanism. Asp-102 contacts Mg(2+). Gln-226 contacts substrate. Asp-254 contributes to the Mg(2+) binding site. 298-300 is a substrate binding site; the sequence is ESQ. Positions 474 and 511 each coordinate ATP. Asn-512 lines the Mg(2+) pocket. A substrate-binding site is contributed by Ser-514.

It belongs to the FGAMS family. Monomer. Part of the FGAM synthase complex composed of 1 PurL, 1 PurQ and 2 PurS subunits.

The protein resides in the cytoplasm. It catalyses the reaction N(2)-formyl-N(1)-(5-phospho-beta-D-ribosyl)glycinamide + L-glutamine + ATP + H2O = 2-formamido-N(1)-(5-O-phospho-beta-D-ribosyl)acetamidine + L-glutamate + ADP + phosphate + H(+). Its pathway is purine metabolism; IMP biosynthesis via de novo pathway; 5-amino-1-(5-phospho-D-ribosyl)imidazole from N(2)-formyl-N(1)-(5-phospho-D-ribosyl)glycinamide: step 1/2. Functionally, part of the phosphoribosylformylglycinamidine synthase complex involved in the purines biosynthetic pathway. Catalyzes the ATP-dependent conversion of formylglycinamide ribonucleotide (FGAR) and glutamine to yield formylglycinamidine ribonucleotide (FGAM) and glutamate. The FGAM synthase complex is composed of three subunits. PurQ produces an ammonia molecule by converting glutamine to glutamate. PurL transfers the ammonia molecule to FGAR to form FGAM in an ATP-dependent manner. PurS interacts with PurQ and PurL and is thought to assist in the transfer of the ammonia molecule from PurQ to PurL. In Methanothermobacter thermautotrophicus (strain ATCC 29096 / DSM 1053 / JCM 10044 / NBRC 100330 / Delta H) (Methanobacterium thermoautotrophicum), this protein is Phosphoribosylformylglycinamidine synthase subunit PurL.